Consider the following 1369-residue polypeptide: Rho-associated protein kinase 1 (1369 aa).

S2 carries the N-acetylserine modification. Positions 76–338 (YEVVKVIGRG…VEEIKRHLFF (263 aa)) constitute a Protein kinase domain. ATP-binding positions include 82–90 (IGRGAFGEV) and K105. The Proton acceptor role is filled by D198. Residues 341 to 409 (DQWAWETLRD…YSNRRYLPSA (69 aa)) enclose the AGC-kinase C-terminal domain. The segment at 368 to 727 (FDDLEEDKGD…KKLKEEREAR (360 aa)) is interaction with FHOD1. The stretch at 422–692 (KNVQESLQKT…RLEQEVNEHK (271 aa)) forms a coiled coil. In terms of domain architecture, REM-1 spans 479–556 (SAVSQIEKEK…LEEANDLLRT (78 aa)). The interval 707–946 (EAKSVAMCEM…TVSRLEEANN (240 aa)) is SHROOM3 binding. One can recognise a RhoBD domain in the interval 949-1015 (TKDIELLRKE…LAEIMNRKDF (67 aa)). Residues 998 to 1010 (LKTQAVNKLAEIM) form an RHOA binding region. Residues 1011-1102 (NRKDFKIDRK…KLLDLSDSTS (92 aa)) are a coiled coil. 2 positions are modified to phosphoserine: S1105 and S1108. The tract at residues 1115-1369 (NLPVGSACIP…VVKNTSGKTS (255 aa)) is auto-inhibitory. The region spanning 1133-1332 (SSRIEGWLSV…WVTHLVKKIP (200 aa)) is the PH domain. Residues 1243–1298 (GHEFIPTLYHFPANCEACAKPLWHVFKPPPALECRRCHVKSHRDHLDKKEDLIPPC) form a Phorbol-ester/DAG-type zinc finger. S1343 carries the post-translational modification Phosphoserine.

Belongs to the protein kinase superfamily. AGC Ser/Thr protein kinase family. Homodimer. Interacts with GEM, MYLC2B, RHOE, LIMK1, LIMK2, TSG101, CHORDC1, DAPK3, PFN1, PTEN and JIP3. Interacts with FHOD1 in a Src-dependent manner. Interacts with ITGB1BP1 (via N-terminus and PTB domain). Interacts with RHOA (activated by GTP), RHOB, RHOC and PPP1R12A. Interacts with SHROOM3. Mg(2+) serves as cofactor. Post-translationally, autophosphorylated on serine and threonine residues. In terms of processing, cleaved by caspase-3 during apoptosis. This leads to constitutive activation of the kinase and membrane blebbing. In terms of tissue distribution, highly expressed in brain, spleen, lung, liver, skeletal muscle, kidney and testis.

Its subcellular location is the cytoplasm. It is found in the cytoskeleton. It localises to the microtubule organizing center. The protein localises to the centrosome. The protein resides in the centriole. Its subcellular location is the golgi apparatus membrane. It is found in the cell projection. It localises to the bleb. The protein localises to the cell membrane. The protein resides in the lamellipodium. Its subcellular location is the ruffle. It carries out the reaction L-seryl-[protein] + ATP = O-phospho-L-seryl-[protein] + ADP + H(+). The catalysed reaction is L-threonyl-[protein] + ATP = O-phospho-L-threonyl-[protein] + ADP + H(+). Its activity is regulated as follows. Activated by RHOA binding. Inhibited by Y-27632. Its function is as follows. Protein kinase which is a key regulator of the actin cytoskeleton and cell polarity. Involved in regulation of smooth muscle contraction, actin cytoskeleton organization, stress fiber and focal adhesion formation, neurite retraction, cell adhesion and motility via phosphorylation of DAPK3, GFAP, LIMK1, LIMK2, MYL9/MLC2, TPPP, PFN1 and PPP1R12A. Phosphorylates FHOD1 and acts synergistically with it to promote SRC-dependent non-apoptotic plasma membrane blebbing. Phosphorylates JIP3 and regulates the recruitment of JNK to JIP3 upon UVB-induced stress. Acts as a suppressor of inflammatory cell migration by regulating PTEN phosphorylation and stability. Acts as a negative regulator of VEGF-induced angiogenic endothelial cell activation. Required for centrosome positioning and centrosome-dependent exit from mitosis. Plays a role in terminal erythroid differentiation. Inhibits podocyte motility via regulation of actin cytoskeletal dynamics and phosphorylation of CFL1. Promotes keratinocyte terminal differentiation. Involved in osteoblast compaction through the fibronectin fibrillogenesis cell-mediated matrix assembly process, essential for osteoblast mineralization. May regulate closure of the eyelids and ventral body wall by inducing the assembly of actomyosin bundles. The sequence is that of Rho-associated protein kinase 1 (Rock1) from Rattus norvegicus (Rat).